A 236-amino-acid chain; its full sequence is Phosphoribosylaminoimidazole-succinocarboxamide synthase (236 aa).

Belongs to the SAICAR synthetase family.

It catalyses the reaction 5-amino-1-(5-phospho-D-ribosyl)imidazole-4-carboxylate + L-aspartate + ATP = (2S)-2-[5-amino-1-(5-phospho-beta-D-ribosyl)imidazole-4-carboxamido]succinate + ADP + phosphate + 2 H(+). The protein operates within purine metabolism; IMP biosynthesis via de novo pathway; 5-amino-1-(5-phospho-D-ribosyl)imidazole-4-carboxamide from 5-amino-1-(5-phospho-D-ribosyl)imidazole-4-carboxylate: step 1/2. The sequence is that of Phosphoribosylaminoimidazole-succinocarboxamide synthase from Rickettsia canadensis (strain McKiel).